A 746-amino-acid polypeptide reads, in one-letter code: Alpha-1,4-glucan:maltose-1-phosphate maltosyltransferase (746 aa).

The disordered stretch occupies residues 1–43; sequence MAAVQHRATTRTSNTDNSTTKTKSKATSARKSPATKRKRVSAE. Positions 10–32 are enriched in low complexity; the sequence is TRTSNTDNSTTKTKSKATSARKS. Residues Lys343, Gln403, and Asp438 each coordinate alpha-maltose 1-phosphate. Residue Asp473 is the Nucleophile of the active site. Asn474 is an alpha-maltose 1-phosphate binding site. Residue Glu502 is the Proton donor of the active site. 612-613 lines the alpha-maltose 1-phosphate pocket; it reads KY.

Belongs to the glycosyl hydrolase 13 family. GlgE subfamily. Homodimer.

It catalyses the reaction alpha-maltose 1-phosphate + [(1-&gt;4)-alpha-D-glucosyl](n) = [(1-&gt;4)-alpha-D-glucosyl](n+2) + phosphate. Its function is as follows. Maltosyltransferase that uses maltose 1-phosphate (M1P) as the sugar donor to elongate linear or branched alpha-(1-&gt;4)-glucans. Is involved in a branched alpha-glucan biosynthetic pathway from trehalose, together with TreS, Mak and GlgB. This Bifidobacterium longum (strain NCC 2705) protein is Alpha-1,4-glucan:maltose-1-phosphate maltosyltransferase.